A 196-amino-acid polypeptide reads, in one-letter code: PRADC1-like protein (196 aa).

A signal peptide spans 1–18 (MLIAWLVLAATLSRSIRA). Residues 73–171 (ITDPPGACQE…STLQRLKRVH (99 aa)) form the PA domain. A glycan (N-linked (GlcNAc...) asparagine) is linked at asparagine 179.

It localises to the secreted. In terms of biological role, may be involved in iversification of muscle cell fates. This Drosophila melanogaster (Fruit fly) protein is PRADC1-like protein.